Here is a 275-residue protein sequence, read N- to C-terminus: MPELPEVETVRRGLKALVLGQEIVAVTLKVPKMVKTDLETFALTLPGQIIQSVGRRGKYLLIDLGQLVLVSHLRMEGKYLLFPDEVPDNKHFHVFFELKNGSTLVYQDVRKFGTFDLIAKSQLSAFFAKRKLGPEPKKETFKLKTFEAVLLSSKKTIKPHLLDQTLVAGLGNIYVDEVLWAAKVHPETASSRLNKAEIKRLHDETIRILALGIEKGGSTVRTYRNTLGADGTMQDYLQVYGQTGKPCPRCGQAIVKLKVGGRGTHICPKCQKKRP.

Residue Pro-2 is the Schiff-base intermediate with DNA of the active site. Glu-3 (proton donor) is an active-site residue. Lys-58 serves as the catalytic Proton donor; for beta-elimination activity. DNA-binding residues include His-91 and Arg-110. The FPG-type zinc finger occupies 238-272 (QVYGQTGKPCPRCGQAIVKLKVGGRGTHICPKCQK). The Proton donor; for delta-elimination activity role is filled by Arg-262.

The protein belongs to the FPG family. Monomer. It depends on Zn(2+) as a cofactor.

The enzyme catalyses Hydrolysis of DNA containing ring-opened 7-methylguanine residues, releasing 2,6-diamino-4-hydroxy-5-(N-methyl)formamidopyrimidine.. It catalyses the reaction 2'-deoxyribonucleotide-(2'-deoxyribose 5'-phosphate)-2'-deoxyribonucleotide-DNA = a 3'-end 2'-deoxyribonucleotide-(2,3-dehydro-2,3-deoxyribose 5'-phosphate)-DNA + a 5'-end 5'-phospho-2'-deoxyribonucleoside-DNA + H(+). Functionally, involved in base excision repair of DNA damaged by oxidation or by mutagenic agents. Acts as a DNA glycosylase that recognizes and removes damaged bases. Has a preference for oxidized purines, such as 7,8-dihydro-8-oxoguanine (8-oxoG). Has AP (apurinic/apyrimidinic) lyase activity and introduces nicks in the DNA strand. Cleaves the DNA backbone by beta-delta elimination to generate a single-strand break at the site of the removed base with both 3'- and 5'-phosphates. This Streptococcus pyogenes serotype M6 (strain ATCC BAA-946 / MGAS10394) protein is Formamidopyrimidine-DNA glycosylase.